Here is a 418-residue protein sequence, read N- to C-terminus: Imidazolonepropionase (418 aa).

2 residues coordinate Fe(3+): His-80 and His-82. Zn(2+)-binding residues include His-80 and His-82. 4-imidazolone-5-propanoate contacts are provided by Arg-89, Tyr-152, and His-185. Position 152 (Tyr-152) interacts with N-formimidoyl-L-glutamate. Fe(3+) is bound at residue His-250. His-250 serves as a coordination point for Zn(2+). Residue Gln-253 participates in 4-imidazolone-5-propanoate binding. Asp-325 is a Fe(3+) binding site. Asp-325 serves as a coordination point for Zn(2+). Asn-327 and Gly-329 together coordinate N-formimidoyl-L-glutamate. Ser-330 is a binding site for 4-imidazolone-5-propanoate.

It belongs to the metallo-dependent hydrolases superfamily. HutI family. Requires Zn(2+) as cofactor. Fe(3+) serves as cofactor.

It localises to the cytoplasm. The enzyme catalyses 4-imidazolone-5-propanoate + H2O = N-formimidoyl-L-glutamate. It participates in amino-acid degradation; L-histidine degradation into L-glutamate; N-formimidoyl-L-glutamate from L-histidine: step 3/3. Functionally, catalyzes the hydrolytic cleavage of the carbon-nitrogen bond in imidazolone-5-propanoate to yield N-formimidoyl-L-glutamate. It is the third step in the universal histidine degradation pathway. The sequence is that of Imidazolonepropionase from Solibacter usitatus (strain Ellin6076).